The primary structure comprises 181 residues: Large ribosomal subunit protein uL5 (181 aa).

This sequence belongs to the universal ribosomal protein uL5 family. Part of the 50S ribosomal subunit; part of the 5S rRNA/L5/L18/L25 subcomplex. Contacts the 5S rRNA and the P site tRNA. Forms a bridge to the 30S subunit in the 70S ribosome.

Functionally, this is one of the proteins that bind and probably mediate the attachment of the 5S RNA into the large ribosomal subunit, where it forms part of the central protuberance. In the 70S ribosome it contacts protein S13 of the 30S subunit (bridge B1b), connecting the 2 subunits; this bridge is implicated in subunit movement. Contacts the P site tRNA; the 5S rRNA and some of its associated proteins might help stabilize positioning of ribosome-bound tRNAs. This is Large ribosomal subunit protein uL5 from Sulfurimonas denitrificans (strain ATCC 33889 / DSM 1251) (Thiomicrospira denitrificans (strain ATCC 33889 / DSM 1251)).